A 150-amino-acid chain; its full sequence is Transcription antitermination protein NusB (150 aa).

It belongs to the NusB family.

Involved in transcription antitermination. Required for transcription of ribosomal RNA (rRNA) genes. Binds specifically to the boxA antiterminator sequence of the ribosomal RNA (rrn) operons. The sequence is that of Transcription antitermination protein NusB from Streptococcus pyogenes serotype M3 (strain ATCC BAA-595 / MGAS315).